The sequence spans 947 residues: Coiled-coil domain-containing protein 39 (947 aa).

Coiled-coil stretches lie at residues 16–194 (AIPV…TLDN), 221–402 (QELI…KELL), 471–522 (KVNT…TEKI), and 582–813 (VLTL…IRSG). 2 stretches are compositionally biased toward low complexity: residues 866-911 (SLPS…VSSP) and 926-947 (SPRG…CKSP). Residues 866-947 (SLPSPSSTPS…SRSSSKCKSP (82 aa)) form a disordered region.

Belongs to the CCDC39 family.

The protein localises to the cytoplasm. The protein resides in the cytoskeleton. It localises to the cilium axoneme. Functionally, required for assembly of dynein regulatory complex (DRC) and inner dynein arm (IDA) complexes, which are responsible for ciliary beat regulation, thereby playing a central role in motility in cilia and flagella. Probably acts together with ccdc40 to form a molecular ruler that determines the 96 nanometer (nm) repeat length and arrangements of components in cilia and flagella. Not required for outer dynein arm complexes assembly. The protein is Coiled-coil domain-containing protein 39 (ccdc39) of Danio rerio (Zebrafish).